Reading from the N-terminus, the 769-residue chain is Metal transporter CNNM4 (769 aa).

Over Met1–Pro175 the chain is Extracellular. N-linked (GlcNAc...) asparagine glycosylation is found at Asn99 and Asn115. The region spanning Pro175–Glu355 is the CNNM transmembrane domain. The helical transmembrane segment at Leu176–Phe196 threads the bilayer. Residues Ser197–Asn237 are Cytoplasmic-facing. The helical intramembrane region spans Tyr238 to Leu258. The Cytoplasmic portion of the chain corresponds to Asp259–Leu261. A helical transmembrane segment spans residues Ile262–Ile282. Over Val283–Gly292 the chain is Extracellular. A helical membrane pass occupies residues Leu293 to Val313. Residues Ala314 to Val769 are Cytoplasmic-facing. CBS domains are found at residues Met374–Leu435 and Tyr442–Glu508. The disordered stretch occupies residues Leu717–Val769. A compositionally biased stretch (polar residues) spans Arg721 to Glu730. Basic and acidic residues predominate over residues Gly732–Val746. Positions Thr752 to Val769 are enriched in polar residues.

It belongs to the ACDP family.

The protein resides in the cell membrane. Functionally, probable metal transporter. This is Metal transporter CNNM4 (cnnm4) from Xenopus tropicalis (Western clawed frog).